The primary structure comprises 540 residues: Protein dml-1 (540 aa).

Positions 517–540 are disordered; the sequence is NELAEMADEYHEGWSSGSDDGDDD.

This sequence belongs to the misato family.

The protein resides in the mitochondrion. Involved in the partitioning of the mitochondrial organelle and mitochondrial DNA (mtDNA) inheritance. The sequence is that of Protein dml-1 (dml-1) from Neurospora crassa (strain ATCC 24698 / 74-OR23-1A / CBS 708.71 / DSM 1257 / FGSC 987).